The sequence spans 385 residues: Type III polyketide synthase C (385 aa).

56-63 (KLQHLCKS) contacts CoA. The active-site Nucleophile is the Cys165. Substrate is bound at residue 217 to 218 (GD). Residues Leu267, 307–310 (GGPA), and Ala310 each bind CoA.

Belongs to the thiolase-like superfamily. Chalcone/stilbene synthases family. In terms of assembly, homodimer.

It localises to the endoplasmic reticulum. The protein operates within secondary metabolite biosynthesis; flavonoid biosynthesis. Its function is as follows. Plant type III polyketide synthases (PKSs) that catalyzes the condensation of malonyl-CoA units with various CoA ester starter molecules to generate a diverse array of natural products including long-chain alkyl alpha-pyrones. The sequence is that of Type III polyketide synthase C from Arabidopsis thaliana (Mouse-ear cress).